A 469-amino-acid polypeptide reads, in one-letter code: Glutamate--tRNA ligase (469 aa).

The short motif at 12–22 is the 'HIGH' region element; the sequence is PSPTGFIHLGN. The short motif at 244–248 is the 'KMSKS' region element; the sequence is KMSKR. Lys-247 lines the ATP pocket.

It belongs to the class-I aminoacyl-tRNA synthetase family. Glutamate--tRNA ligase type 1 subfamily. As to quaternary structure, monomer.

It localises to the cytoplasm. The catalysed reaction is tRNA(Glu) + L-glutamate + ATP = L-glutamyl-tRNA(Glu) + AMP + diphosphate. Functionally, catalyzes the attachment of glutamate to tRNA(Glu) in a two-step reaction: glutamate is first activated by ATP to form Glu-AMP and then transferred to the acceptor end of tRNA(Glu). This chain is Glutamate--tRNA ligase, found in Acidovorax sp. (strain JS42).